The sequence spans 511 residues: Phosphoenolpyruvate carboxylase (511 aa).

This sequence belongs to the PEPCase type 2 family. In terms of assembly, homotetramer. It depends on Mg(2+) as a cofactor.

The catalysed reaction is oxaloacetate + phosphate = phosphoenolpyruvate + hydrogencarbonate. Catalyzes the irreversible beta-carboxylation of phosphoenolpyruvate (PEP) to form oxaloacetate (OAA), a four-carbon dicarboxylic acid source for the tricarboxylic acid cycle. This chain is Phosphoenolpyruvate carboxylase, found in Saccharolobus islandicus (strain M.16.27) (Sulfolobus islandicus).